The sequence spans 364 residues: 4-hydroxythreonine-4-phosphate dehydrogenase (364 aa).

2 residues coordinate substrate: His148 and Thr149. 3 residues coordinate a divalent metal cation: His177, His216, and His301. Residues Lys309, Asn318, and Arg327 each coordinate substrate.

Belongs to the PdxA family. In terms of assembly, homodimer. Zn(2+) is required as a cofactor. The cofactor is Mg(2+). It depends on Co(2+) as a cofactor.

Its subcellular location is the cytoplasm. The catalysed reaction is 4-(phosphooxy)-L-threonine + NAD(+) = 3-amino-2-oxopropyl phosphate + CO2 + NADH. It functions in the pathway cofactor biosynthesis; pyridoxine 5'-phosphate biosynthesis; pyridoxine 5'-phosphate from D-erythrose 4-phosphate: step 4/5. Functionally, catalyzes the NAD(P)-dependent oxidation of 4-(phosphooxy)-L-threonine (HTP) into 2-amino-3-oxo-4-(phosphooxy)butyric acid which spontaneously decarboxylates to form 3-amino-2-oxopropyl phosphate (AHAP). This chain is 4-hydroxythreonine-4-phosphate dehydrogenase, found in Campylobacter jejuni subsp. jejuni serotype O:23/36 (strain 81-176).